The chain runs to 44 residues: uncharacterized protein (44 aa).

The first 16 residues, 1–16 (MRISLLAVILALLFVA), serve as a signal peptide directing secretion.

This is an uncharacterized protein from Helicobacter pylori (strain ATCC 700392 / 26695) (Campylobacter pylori).